The sequence spans 805 residues: Pentatricopeptide repeat-containing protein At4g01570 (805 aa).

PPR repeat units follow at residues 91–125, 126–160, 161–196, 211–241, 247–277, 288–322, 323–357, 358–392, 393–427, 428–462, 463–497, 593–627, 629–663, 664–698, 699–733, and 734–768; these read SATA…GVNL, DQTM…GDCL, NPSV…DNHS, GTVA…LKGM, DTWS…MKER, DICT…GHEP, DNST…GFVP, DTIV…GVRA, SCWT…GQFV, DAIT…GFSV, DLVT…NLVP, DVDM…GVTD, TSYT…FCAA, DIAT…GGYL, DIVM…GINP, and DVVS…GCLP.

The protein belongs to the PPR family. P subfamily.

The polypeptide is Pentatricopeptide repeat-containing protein At4g01570 (Arabidopsis thaliana (Mouse-ear cress)).